We begin with the raw amino-acid sequence, 247 residues long: Coproheme decarboxylase (247 aa).

Residues arginine 129, 143–147 (YPMDK), histidine 170, glutamine 183, and serine 221 contribute to the Fe-coproporphyrin III site. Residue tyrosine 143 is part of the active site.

The protein belongs to the ChdC family. Type 1 subfamily. It depends on Fe-coproporphyrin III as a cofactor.

The enzyme catalyses Fe-coproporphyrin III + 2 H2O2 + 2 H(+) = heme b + 2 CO2 + 4 H2O. It catalyses the reaction Fe-coproporphyrin III + H2O2 + H(+) = harderoheme III + CO2 + 2 H2O. The catalysed reaction is harderoheme III + H2O2 + H(+) = heme b + CO2 + 2 H2O. Its pathway is porphyrin-containing compound metabolism; protoheme biosynthesis. Involved in coproporphyrin-dependent heme b biosynthesis. Catalyzes the decarboxylation of Fe-coproporphyrin III (coproheme) to heme b (protoheme IX), the last step of the pathway. The reaction occurs in a stepwise manner with a three-propionate intermediate. The sequence is that of Coproheme decarboxylase from Bacillus anthracis.